The following is a 509-amino-acid chain: Photosystem II CP47 reaction center protein (509 aa).

The next 6 membrane-spanning stretches (helical) occupy residues 21–36 (AVHL…WAGS), 101–115 (IILS…IWHW), 140–156 (GIHL…FGAF), 203–218 (IAAG…FHLT), 237–252 (VLSS…AFVT), and 457–472 (NFAL…HGGR).

Belongs to the PsbB/PsbC family. PsbB subfamily. In terms of assembly, PSII is composed of 1 copy each of membrane proteins PsbA, PsbB, PsbC, PsbD, PsbE, PsbF, PsbH, PsbI, PsbJ, PsbK, PsbL, PsbM, PsbT, PsbX, PsbY, PsbZ, Psb30/Ycf12, at least 3 peripheral proteins of the oxygen-evolving complex and a large number of cofactors. It forms dimeric complexes. Requires Binds multiple chlorophylls. PSII binds additional chlorophylls, carotenoids and specific lipids. as cofactor.

It is found in the plastid. The protein localises to the chloroplast thylakoid membrane. Functionally, one of the components of the core complex of photosystem II (PSII). It binds chlorophyll and helps catalyze the primary light-induced photochemical processes of PSII. PSII is a light-driven water:plastoquinone oxidoreductase, using light energy to abstract electrons from H(2)O, generating O(2) and a proton gradient subsequently used for ATP formation. The sequence is that of Photosystem II CP47 reaction center protein from Trieres chinensis (Marine centric diatom).